A 265-amino-acid polypeptide reads, in one-letter code: Undecaprenyl-diphosphatase (265 aa).

7 helical membrane passes run 38 to 58, 75 to 95, 108 to 128, 135 to 155, 181 to 201, 215 to 235, and 244 to 264; these read RSDF…CLAL, RDYV…GLIV, PVAW…HVAG, VVTW…GVFP, FVFM…LLEM, VAVA…WLLS, and VFAV…PAAA.

The protein belongs to the UppP family.

It is found in the cell inner membrane. The enzyme catalyses di-trans,octa-cis-undecaprenyl diphosphate + H2O = di-trans,octa-cis-undecaprenyl phosphate + phosphate + H(+). In terms of biological role, catalyzes the dephosphorylation of undecaprenyl diphosphate (UPP). Confers resistance to bacitracin. The chain is Undecaprenyl-diphosphatase from Xanthomonas oryzae pv. oryzae (strain MAFF 311018).